Here is a 40-residue protein sequence, read N- to C-terminus: Large ribosomal subunit protein bL36B (40 aa).

The protein belongs to the bacterial ribosomal protein bL36 family.

The polypeptide is Large ribosomal subunit protein bL36B (Clavibacter michiganensis subsp. michiganensis (strain NCPPB 382)).